A 204-amino-acid chain; its full sequence is Intraflagellar transport protein 27 (204 aa).

GTP contacts are provided by residues 23–30, 75–79, and 136–139; these read GEATVGKS, DTAGS, and NKTD.

It belongs to the small GTPase superfamily. Rab family. In terms of assembly, component of the IFT complex B, the core composed of IFT25, IFT27, IFT46, IFT52, IFT74, IFT81 and IFT88 as well as associated subunits IFT20, IFT57, IFT80 and IFT172. Interacts with IFT25; the interaction is direct.

Its subcellular location is the cell projection. It localises to the cilium. The protein resides in the flagellum. The protein localises to the cytoplasm. It is found in the cytoskeleton. Its subcellular location is the flagellum basal body. Functionally, small GTPase-like component of the intraflagellar transport (IFT) complex B. Forms a subcomplex within the IFT complex B with IFT25. Has very low GTPase activity either because it lacks the conserved catalytic Gln in position 79 or because it requires some GTPase-activating protein (GAP) for GTP turnover. This is Intraflagellar transport protein 27 (IFT27) from Chlamydomonas reinhardtii (Chlamydomonas smithii).